The following is a 128-amino-acid chain: Large-conductance mechanosensitive channel (128 aa).

A run of 2 helical transmembrane segments spans residues F10 to G30 and G76 to V96.

It belongs to the MscL family. In terms of assembly, homopentamer.

The protein localises to the cell inner membrane. Functionally, channel that opens in response to stretch forces in the membrane lipid bilayer. May participate in the regulation of osmotic pressure changes within the cell. The sequence is that of Large-conductance mechanosensitive channel from Mannheimia succiniciproducens (strain KCTC 0769BP / MBEL55E).